A 668-amino-acid chain; its full sequence is Break repair meiotic recombinase recruitment factor 1 (668 aa).

Disordered regions lie at residues M1–P142, L155–S333, L349–N465, V482–D521, and L642–L668. A compositionally biased stretch (basic and acidic residues) spans T114–G125. The span at Q166–V180 shows a compositional bias: polar residues. Over residues S208–A251 the composition is skewed to basic and acidic residues. A compositionally biased stretch (low complexity) spans T279–S296. The span at A305 to S316 shows a compositional bias: polar residues. S370 carries the phosphoserine modification. Residues T391–E400 are compositionally biased toward low complexity.

In terms of assembly, interacts with HSF2BP (via N-terminus) and BRCA2; the interaction with HSF2BP is direct and allows the formation of a ternary complex. The complex BRME1:HSF2BP:BRCA2 interacts with SPATA22, MEIOB and RAD51.

Its subcellular location is the chromosome. Meiotic recombination factor component of recombination bridges involved in meiotic double-strand break repair. Modulates the localization of recombinases DMC1:RAD51 to meiotic double-strand break (DSB) sites through the interaction with and stabilization of the BRCA2:HSF2BP complex during meiotic recombination. Indispensable for the DSB repair, homologous synapsis, and crossover formation that are needed for progression past metaphase I, is essential for spermatogenesis and male fertility. This Homo sapiens (Human) protein is Break repair meiotic recombinase recruitment factor 1.